The chain runs to 87 residues: uncharacterized protein (87 aa).

The helical transmembrane segment at 42–62 threads the bilayer; it reads LADALYSAGSAAFTIAASLVA.

Belongs to the SPP1 holin family.

It is found in the membrane. This is an uncharacterized protein from Bacillus licheniformis.